Reading from the N-terminus, the 316-residue chain is Aspartate carbamoyltransferase catalytic subunit (316 aa).

The carbamoyl phosphate site is built by Arg56 and Thr57. Lys84 lines the L-aspartate pocket. Residues Arg106, His139, and Gln142 each contribute to the carbamoyl phosphate site. Residues Arg172 and Arg226 each coordinate L-aspartate. 2 residues coordinate carbamoyl phosphate: Gly267 and Pro268.

The protein belongs to the aspartate/ornithine carbamoyltransferase superfamily. ATCase family. As to quaternary structure, heterododecamer (2C3:3R2) of six catalytic PyrB chains organized as two trimers (C3), and six regulatory PyrI chains organized as three dimers (R2).

It carries out the reaction carbamoyl phosphate + L-aspartate = N-carbamoyl-L-aspartate + phosphate + H(+). The protein operates within pyrimidine metabolism; UMP biosynthesis via de novo pathway; (S)-dihydroorotate from bicarbonate: step 2/3. Catalyzes the condensation of carbamoyl phosphate and aspartate to form carbamoyl aspartate and inorganic phosphate, the committed step in the de novo pyrimidine nucleotide biosynthesis pathway. The protein is Aspartate carbamoyltransferase catalytic subunit of Mycobacterium sp. (strain MCS).